Here is a 590-residue protein sequence, read N- to C-terminus: UvrABC system protein C (590 aa).

The GIY-YIG domain occupies 14 to 91; that stretch reads DQPGCYLMKD…IKKYDPKYNV (78 aa). The 36-residue stretch at 196–231 folds into the UVR domain; sequence QQIKKELTEKMQEAAEQLEFERAKELRDQIAYIDST.

This sequence belongs to the UvrC family. Interacts with UvrB in an incision complex.

Its subcellular location is the cytoplasm. Its function is as follows. The UvrABC repair system catalyzes the recognition and processing of DNA lesions. UvrC both incises the 5' and 3' sides of the lesion. The N-terminal half is responsible for the 3' incision and the C-terminal half is responsible for the 5' incision. The chain is UvrABC system protein C from Bacillus pumilus (strain SAFR-032).